Here is a 237-residue protein sequence, read N- to C-terminus: Large ribosomal subunit protein uL1 (237 aa).

The protein belongs to the universal ribosomal protein uL1 family. As to quaternary structure, part of the 50S ribosomal subunit.

Its function is as follows. Binds directly to 23S rRNA. The L1 stalk is quite mobile in the ribosome, and is involved in E site tRNA release. Functionally, protein L1 is also a translational repressor protein, it controls the translation of the L11 operon by binding to its mRNA. The protein is Large ribosomal subunit protein uL1 of Dehalococcoides mccartyi (strain ATCC BAA-2100 / JCM 16839 / KCTC 5957 / BAV1).